The chain runs to 421 residues: Alpha-tubulin N-acetyltransferase 1 (421 aa).

An N-acetyltransferase domain is found at 1 to 190 (MEFPFDVDAL…NNFVIFEGFF (190 aa)). An N6-acetyllysine; by autocatalysis modification is found at Lys-56. 124–137 (FYIHESVQRHGHGR) contributes to the acetyl-CoA binding site. Lys-146 carries the post-translational modification N6-acetyllysine; by autocatalysis. 160 to 169 (SQKLLKFLNK) lines the acetyl-CoA pocket. The segment at 196–235 (PPAPSLRATRHSRAAAVDPTPAAPARKLPPKRAEGDIKPY) is disordered. Low complexity predominate over residues 209–221 (AAAVDPTPAAPAR). Residues 226 to 235 (KRAEGDIKPY) are compositionally biased toward basic and acidic residues. An N6-acetyllysine; by autocatalysis mark is found at Lys-233 and Lys-244. A disordered region spans residues 252–284 (PLNRAPRRATPPAHPPPRSSSLGNSPERGPLRP). Phosphoserine occurs at positions 272 and 276. Arg-305 carries the asymmetric dimethylarginine modification. The interval 306–402 (LLLAADPGGS…PAQSWTVGGD (97 aa)) is disordered. Phosphoserine is present on Ser-315. At Arg-323 the chain carries Omega-N-methylarginine. The segment covering 342–354 (VNSSSPNTGNQDS) has biased composition (polar residues). A compositionally biased stretch (basic and acidic residues) spans 355-367 (KQGEQETKNRSAS).

It belongs to the acetyltransferase ATAT1 family. As to quaternary structure, component of the BBSome complex. Interacts with AP2 alpha-adaptins, including AP2A2, but not with AP1 gamma-adaptin (AP1G1/AP1G2); this interaction is required for efficient alpha-tubulin acetylation, hence clathrin-coated pits are sites of microtubule acetylation. Autoacetylation strongly increases tubulin acetylation.

The protein resides in the cytoplasm. Its subcellular location is the membrane. The protein localises to the clathrin-coated pit. It is found in the cell junction. It localises to the focal adhesion. The protein resides in the cell projection. Its subcellular location is the axon. The protein localises to the cytoskeleton. It is found in the spindle. The catalysed reaction is L-lysyl-[alpha-tubulin] + acetyl-CoA = N(6)-acetyl-L-lysyl-[alpha-tubulin] + CoA + H(+). Functionally, specifically acetylates 'Lys-40' in alpha-tubulin on the lumenal side of microtubules. Promotes microtubule destabilization and accelerates microtubule dynamics; this activity may be independent of acetylation activity. Acetylates alpha-tubulin with a slow enzymatic rate, due to a catalytic site that is not optimized for acetyl transfer. Enters the microtubule through each end and diffuses quickly throughout the lumen of microtubules. Acetylates only long/old microtubules because of its slow acetylation rate since it does not have time to act on dynamically unstable microtubules before the enzyme is released. Required for normal sperm flagellar function. Promotes directional cell locomotion and chemotaxis, through AP2A2-dependent acetylation of alpha-tubulin at clathrin-coated pits that are concentrated at the leading edge of migrating cells. May facilitate primary cilium assembly. The polypeptide is Alpha-tubulin N-acetyltransferase 1 (Homo sapiens (Human)).